Consider the following 261-residue polypeptide: uncharacterized protein (261 aa).

The signal sequence occupies residues 1–20 (MKIQVMLIIIFVGIFTICLA). 2 N-linked (GlcNAc...) asparagine; by host glycosylation sites follow: asparagine 22 and asparagine 27.

It localises to the secreted. This is an uncharacterized protein from Acanthamoeba polyphaga (Amoeba).